Here is a 332-residue protein sequence, read N- to C-terminus: 3-dehydrosphinganine reductase (332 aa).

Positions 1-25 (MLLVVAAFIVAFVLLLYMISPLISP) are cleaved as a signal peptide. Positions 39, 41, 42, 43, 64, 65, 68, and 93 each coordinate NADPH. Residues 39 to 43 (GGSSG) carry the GXSXG motif. Catalysis depends on serine 172, which acts as the Proton donor. The Proton acceptor role is filled by tyrosine 186. NADP(+)-binding residues include tyrosine 186 and lysine 190. Residue lysine 190 is the Lowers pKa of active site Tyr of the active site.

Belongs to the short-chain dehydrogenases/reductases (SDR) family.

Its subcellular location is the endoplasmic reticulum. It carries out the reaction sphinganine + NADP(+) = 3-oxosphinganine + NADPH + H(+). It functions in the pathway lipid metabolism; sphingolipid metabolism. Functionally, catalyzes the reduction of 3'-oxosphinganine (3-ketodihydrosphingosine/KDS) to sphinganine (dihydrosphingosine/DHS), the second step of de novo sphingolipid biosynthesis. The sequence is that of 3-dehydrosphinganine reductase (kdsr) from Danio rerio (Zebrafish).